Reading from the N-terminus, the 137-residue chain is Putative protein YjhV (137 aa).

Residues methionine 1 to threonine 16 are compositionally biased toward polar residues. A disordered region spans residues methionine 1 to arginine 20.

In Escherichia coli (strain K12), this protein is Putative protein YjhV (yjhV).